The following is a 406-amino-acid chain: Tryptophan synthase beta chain (406 aa).

Lys-95 carries the N6-(pyridoxal phosphate)lysine modification.

The protein belongs to the TrpB family. Tetramer of two alpha and two beta chains. The cofactor is pyridoxal 5'-phosphate.

It carries out the reaction (1S,2R)-1-C-(indol-3-yl)glycerol 3-phosphate + L-serine = D-glyceraldehyde 3-phosphate + L-tryptophan + H2O. Its pathway is amino-acid biosynthesis; L-tryptophan biosynthesis; L-tryptophan from chorismate: step 5/5. Its function is as follows. The beta subunit is responsible for the synthesis of L-tryptophan from indole and L-serine. In Azotobacter vinelandii (strain DJ / ATCC BAA-1303), this protein is Tryptophan synthase beta chain.